The sequence spans 160 residues: SsrA-binding protein (160 aa).

It belongs to the SmpB family.

The protein localises to the cytoplasm. Functionally, required for rescue of stalled ribosomes mediated by trans-translation. Binds to transfer-messenger RNA (tmRNA), required for stable association of tmRNA with ribosomes. tmRNA and SmpB together mimic tRNA shape, replacing the anticodon stem-loop with SmpB. tmRNA is encoded by the ssrA gene; the 2 termini fold to resemble tRNA(Ala) and it encodes a 'tag peptide', a short internal open reading frame. During trans-translation Ala-aminoacylated tmRNA acts like a tRNA, entering the A-site of stalled ribosomes, displacing the stalled mRNA. The ribosome then switches to translate the ORF on the tmRNA; the nascent peptide is terminated with the 'tag peptide' encoded by the tmRNA and targeted for degradation. The ribosome is freed to recommence translation, which seems to be the essential function of trans-translation. This is SsrA-binding protein from Novosphingobium aromaticivorans (strain ATCC 700278 / DSM 12444 / CCUG 56034 / CIP 105152 / NBRC 16084 / F199).